We begin with the raw amino-acid sequence, 257 residues long: 7-carboxy-7-deazaguanine synthase (257 aa).

Residues 29-31 (LQG) and arginine 44 each bind substrate. The Radical SAM core domain maps to 35–253 (LAGTPSVFVR…PRLHVALWND (219 aa)). Cysteine 48, cysteine 52, and cysteine 55 together coordinate [4Fe-4S] cluster. Serine 57 lines the Mg(2+) pocket. Threonine 90 provides a ligand contact to substrate. Residue glycine 92 coordinates S-adenosyl-L-methionine. The segment at 133–153 (VSPKLASSTPTAETDPKGDGE) is disordered.

Belongs to the radical SAM superfamily. 7-carboxy-7-deazaguanine synthase family. Homodimer. The cofactor is [4Fe-4S] cluster. It depends on S-adenosyl-L-methionine as a cofactor. Mg(2+) is required as a cofactor.

The catalysed reaction is 6-carboxy-5,6,7,8-tetrahydropterin + H(+) = 7-carboxy-7-deazaguanine + NH4(+). It functions in the pathway purine metabolism; 7-cyano-7-deazaguanine biosynthesis. In terms of biological role, catalyzes the complex heterocyclic radical-mediated conversion of 6-carboxy-5,6,7,8-tetrahydropterin (CPH4) to 7-carboxy-7-deazaguanine (CDG), a step common to the biosynthetic pathways of all 7-deazapurine-containing compounds. The protein is 7-carboxy-7-deazaguanine synthase of Halobacterium salinarum (strain ATCC 29341 / DSM 671 / R1).